A 252-amino-acid chain; its full sequence is Probable phosphatase Shewmr4_2619 (252 aa).

Zn(2+) is bound by residues H8, H10, H16, H41, E74, H102, H132, D193, and H195.

It belongs to the PHP family. Requires Zn(2+) as cofactor.

The sequence is that of Probable phosphatase Shewmr4_2619 from Shewanella sp. (strain MR-4).